The sequence spans 109 residues: Small ribosomal subunit protein bS20 (109 aa).

Residues 1 to 26 (MANIKSAKKRAIQSEKRRKHNASRRS) form a disordered region.

Belongs to the bacterial ribosomal protein bS20 family.

Binds directly to 16S ribosomal RNA. This Hamiltonella defensa subsp. Acyrthosiphon pisum (strain 5AT) protein is Small ribosomal subunit protein bS20.